Reading from the N-terminus, the 318-residue chain is Probable carboxylesterase 1 (318 aa).

M1 is subject to N-acetylmethionine. Positions 79-81 (HGG) match the Involved in the stabilization of the negatively charged intermediate by the formation of the oxyanion hole motif. Residues S163, D258, and H290 contribute to the active site.

This sequence belongs to the 'GDXG' lipolytic enzyme family. As to expression, expressed in roots, stems, flowers and siliques.

It carries out the reaction a carboxylic ester + H2O = an alcohol + a carboxylate + H(+). In terms of biological role, carboxylesterase acting on esters with varying acyl chain length. This is Probable carboxylesterase 1 (CXE1) from Arabidopsis thaliana (Mouse-ear cress).